Reading from the N-terminus, the 180-residue chain is MMPRLQEKYEKEVVSALMDKFGYKNIMEVPKLEKIVINMGVGEAKENQKALEAAVEDLAKITGQKPILTKAKKSVANFKIRENMPLGCKVTLRKQNMYEFADKLINVALPRVRDFSGVSSKSFDGRGNYAIGIKEQLIFPEIEFDKIDKIRGMDIIFVTTAKTDEEARELLRFLGMPFAR.

Belongs to the universal ribosomal protein uL5 family. Part of the 50S ribosomal subunit; part of the 5S rRNA/L5/L18/L25 subcomplex. Contacts the 5S rRNA and the P site tRNA. Forms a bridge to the 30S subunit in the 70S ribosome.

Its function is as follows. This is one of the proteins that bind and probably mediate the attachment of the 5S RNA into the large ribosomal subunit, where it forms part of the central protuberance. In the 70S ribosome it contacts protein S13 of the 30S subunit (bridge B1b), connecting the 2 subunits; this bridge is implicated in subunit movement. Contacts the P site tRNA; the 5S rRNA and some of its associated proteins might help stabilize positioning of ribosome-bound tRNAs. This chain is Large ribosomal subunit protein uL5, found in Clostridium botulinum (strain Loch Maree / Type A3).